Reading from the N-terminus, the 280-residue chain is Four and a half LIM domains protein 1 (280 aa).

Ser-2 is subject to N-acetylserine. Lys-4 carries the N6-acetyllysine modification. Residues 7 to 31 form a C4-type zinc finger; that stretch reads CHYCRDPLQGKKYVQKDGRHCCLKC. LIM zinc-binding domains are found at residues 40–92, 101–153, 162–212, and 221–276; these read CVDC…CNKC, CKGC…CVTC, CVKC…CVDC, and CAGC…CPDC. A Glycyl lysine isopeptide (Lys-Gly) (interchain with G-Cter in SUMO2) cross-link involves residue Lys-86.

In terms of tissue distribution, isoform 1 seems to be most abundant in each tissue and isoform 2 much less abundant. Isoform 1 is highly expressed in skeletal muscle and lung, and to a lesser extent in heart, brain and kidney. Isoform 2 was found in brain, lung kidney and genital organs.

It is found in the cytoplasm. Its subcellular location is the nucleus. In terms of biological role, may have an involvement in muscle development or hypertrophy. Isoform 2 binds to RBP-J and plays a negative regulatory role in the RBP-J-mediated transcription in mammalian systems. The sequence is that of Four and a half LIM domains protein 1 (Fhl1) from Mus musculus (Mouse).